Consider the following 332-residue polypeptide: L-lactate dehydrogenase A chain (332 aa).

Residue Ala-2 is modified to N-acetylalanine. Lys-5 bears the N6-acetyllysine; alternate mark. Lys-5 is subject to N6-succinyllysine; alternate. Lys-14 is subject to N6-acetyllysine. NAD(+) is bound at residue 29-57 (GAVGMACAISILMKDLADELALVDVIEDK). An N6-acetyllysine; alternate modification is found at Lys-57. Lys-57 participates in a covalent cross-link: Glycyl lysine isopeptide (Lys-Gly) (interchain with G-Cter in SUMO2); alternate. Lys-81 carries the N6-acetyllysine modification. Position 99 (Arg-99) interacts with NAD(+). A substrate-binding site is contributed by Arg-106. Lys-118 carries the N6-acetyllysine; alternate modification. Position 118 is an N6-succinyllysine; alternate (Lys-118). Lys-126 carries the post-translational modification N6-acetyllysine. Position 138 (Asn-138) interacts with NAD(+). Residues Asn-138 and Arg-169 each coordinate substrate. Catalysis depends on His-193, which acts as the Proton acceptor. Position 213 is a phosphoserine (Ser-213). Lys-224 and Lys-232 each carry N6-acetyllysine. Tyr-239 is subject to Phosphotyrosine. Lys-243 is modified (N6-acetyllysine). Thr-248 serves as a coordination point for substrate. A Phosphothreonine modification is found at Thr-309. Lys-318 bears the N6-acetyllysine; alternate mark. Lys-318 bears the N6-succinyllysine; alternate mark. A Phosphothreonine modification is found at Thr-322.

It belongs to the LDH/MDH superfamily. LDH family. As to quaternary structure, homotetramer. Interacts with PTEN upstream reading frame protein MP31. In terms of processing, ISGylated.

It is found in the cytoplasm. The enzyme catalyses (S)-lactate + NAD(+) = pyruvate + NADH + H(+). It participates in fermentation; pyruvate fermentation to lactate; (S)-lactate from pyruvate: step 1/1. Functionally, interconverts simultaneously and stereospecifically pyruvate and lactate with concomitant interconversion of NADH and NAD(+). The sequence is that of L-lactate dehydrogenase A chain (Ldha) from Rattus norvegicus (Rat).